We begin with the raw amino-acid sequence, 320 residues long: o-succinylbenzoate synthase (320 aa).

Lys-133 serves as the catalytic Proton donor. Asp-161, Glu-190, and Asp-213 together coordinate Mg(2+). Residue Lys-235 is the Proton acceptor of the active site.

It belongs to the mandelate racemase/muconate lactonizing enzyme family. MenC type 1 subfamily. A divalent metal cation is required as a cofactor.

It carries out the reaction (1R,6R)-6-hydroxy-2-succinyl-cyclohexa-2,4-diene-1-carboxylate = 2-succinylbenzoate + H2O. Its pathway is quinol/quinone metabolism; 1,4-dihydroxy-2-naphthoate biosynthesis; 1,4-dihydroxy-2-naphthoate from chorismate: step 4/7. The protein operates within quinol/quinone metabolism; menaquinone biosynthesis. In terms of biological role, converts 2-succinyl-6-hydroxy-2,4-cyclohexadiene-1-carboxylate (SHCHC) to 2-succinylbenzoate (OSB). This Shigella flexneri protein is o-succinylbenzoate synthase.